A 482-amino-acid chain; its full sequence is Ribosomal RNA small subunit methyltransferase F (482 aa).

Residues 119 to 125 (ASAPGSK), glutamate 143, aspartate 170, and aspartate 188 contribute to the S-adenosyl-L-methionine site. Cysteine 241 serves as the catalytic Nucleophile.

Belongs to the class I-like SAM-binding methyltransferase superfamily. RsmB/NOP family.

It localises to the cytoplasm. The catalysed reaction is cytidine(1407) in 16S rRNA + S-adenosyl-L-methionine = 5-methylcytidine(1407) in 16S rRNA + S-adenosyl-L-homocysteine + H(+). Its function is as follows. Specifically methylates the cytosine at position 1407 (m5C1407) of 16S rRNA. This Shewanella sp. (strain MR-7) protein is Ribosomal RNA small subunit methyltransferase F.